The sequence spans 258 residues: Acyl-[acyl-carrier-protein]--UDP-N-acetylglucosamine O-acyltransferase (258 aa).

It belongs to the transferase hexapeptide repeat family. LpxA subfamily. Homotrimer.

It localises to the cytoplasm. It catalyses the reaction a (3R)-hydroxyacyl-[ACP] + UDP-N-acetyl-alpha-D-glucosamine = a UDP-3-O-[(3R)-3-hydroxyacyl]-N-acetyl-alpha-D-glucosamine + holo-[ACP]. Its pathway is glycolipid biosynthesis; lipid IV(A) biosynthesis; lipid IV(A) from (3R)-3-hydroxytetradecanoyl-[acyl-carrier-protein] and UDP-N-acetyl-alpha-D-glucosamine: step 1/6. In terms of biological role, involved in the biosynthesis of lipid A, a phosphorylated glycolipid that anchors the lipopolysaccharide to the outer membrane of the cell. This is Acyl-[acyl-carrier-protein]--UDP-N-acetylglucosamine O-acyltransferase from Pseudomonas savastanoi pv. phaseolicola (strain 1448A / Race 6) (Pseudomonas syringae pv. phaseolicola (strain 1448A / Race 6)).